Here is a 329-residue protein sequence, read N- to C-terminus: Solute carrier family 35 member B1 (329 aa).

A run of 8 helical transmembrane segments spans residues 21–41, 60–80, 91–111, 142–162, 175–195, 220–240, 250–270, and 292–312; these read AVCFCGVFVCYFYYGILQETI, TLVFIQCIINAAFARLLIQFF, WLYGLCSLSYLGAMVSSNSAL, YPMAKYLCVFLIVGGVALFLY, VFGFGEMLLLLSLTLDGLTGV, TLVLGIAVLWSGEVWEFLAFT, ILLFGITSALGQTFIFMTVVY, and VLLFGNVISHMQWFGTILVFL. Positions 325-329 match the Di-lysine motif motif; it reads KKTTH.

It belongs to the nucleotide-sugar transporter family. SLC35B subfamily.

The protein resides in the endoplasmic reticulum membrane. Probable sugar transporter. The sequence is that of Solute carrier family 35 member B1 (slc35b1) from Danio rerio (Zebrafish).